A 359-amino-acid polypeptide reads, in one-letter code: Guanine nucleotide-binding protein G(q) subunit alpha (359 aa).

S-palmitoyl cysteine attachment occurs at residues Cys-9 and Cys-10. The G-alpha domain occupies 38–359; sequence RELKLLLLGT…QLNLKEYNLV (322 aa). The segment at 41 to 54 is G1 motif; that stretch reads KLLLLGTGESGKST. GTP is bound by residues Ser-50, Gly-51, Lys-52, Ser-53, Thr-54, Ser-156, Leu-180, Arg-181, and Arg-183. Position 53 (Ser-53) interacts with Mg(2+). The segment at 178 to 186 is G2 motif; sequence DVLRVRVPT. A Mg(2+)-binding site is contributed by Thr-186. Residues 201–210 are G3 motif; it reads FRMVDVGGQR. At Gln-209 the chain carries 5-glutamyl histamine. The G4 motif stretch occupies residues 270–277; sequence ILFLNKKD. GTP is bound by residues Asn-274, Lys-275, Asp-277, and Ala-331. The interval 329–334 is G5 motif; that stretch reads TCATDT.

It belongs to the G-alpha family. G(q) subfamily. As to quaternary structure, g proteins are composed of 3 units; alpha, beta and gamma. The alpha chain contains the guanine nucleotide binding site. Interacts (GDP-bound form) with RIC8A (via C-terminus); promoting GNAQ folding and association with the plasma membrane. Binds NHERF1. Forms a complex with PECAM1 and BDKRB2. Interacts with GAS2L2. In terms of processing, palmitoylated by ZDHHC3 and ZDHHC7. Palmitoylation occurs in the Golgi and participates in the localization of GNAQ to the plasma membrane. Post-translationally, histaminylated at Gln-209 residues by TGM2.

It is found in the cell membrane. It localises to the golgi apparatus. The protein resides in the nucleus. Its subcellular location is the nucleus membrane. The enzyme catalyses GTP + H2O = GDP + phosphate + H(+). Functionally, guanine nucleotide-binding proteins (G proteins) function as transducers downstream of G protein-coupled receptors (GPCRs) in numerous signaling cascades. The alpha chain contains the guanine nucleotide binding site and alternates between an active, GTP-bound state and an inactive, GDP-bound state. Signaling by an activated GPCR promotes GDP release and GTP binding. The alpha subunit has a low GTPase activity that converts bound GTP to GDP, thereby terminating the signal. Both GDP release and GTP hydrolysis are modulated by numerous regulatory proteins. Signaling is mediated via phospholipase C-beta-dependent inositol lipid hydrolysis for signal propagation: activates phospholipase C-beta: following GPCR activation, GNAQ activates PLC-beta (PLCB1, PLCB2, PLCB3 or PLCB4), leading to production of diacylglycerol (DAG) and inositol 1,4,5-trisphosphate (IP3). Required for platelet activation. Regulates B-cell selection and survival and is required to prevent B-cell-dependent autoimmunity. Regulates chemotaxis of BM-derived neutrophils and dendritic cells (in vitro). Transduces FFAR4 signaling in response to long-chain fatty acids (LCFAs). Together with GNA11, required for heart development. The chain is Guanine nucleotide-binding protein G(q) subunit alpha (GNAQ) from Canis lupus familiaris (Dog).